The primary structure comprises 177 residues: Large ribosomal subunit protein uL6 (177 aa).

It belongs to the universal ribosomal protein uL6 family. As to quaternary structure, part of the 50S ribosomal subunit.

Its function is as follows. This protein binds to the 23S rRNA, and is important in its secondary structure. It is located near the subunit interface in the base of the L7/L12 stalk, and near the tRNA binding site of the peptidyltransferase center. This Methanothermobacter thermautotrophicus (strain ATCC 29096 / DSM 1053 / JCM 10044 / NBRC 100330 / Delta H) (Methanobacterium thermoautotrophicum) protein is Large ribosomal subunit protein uL6.